The primary structure comprises 63 residues: MAETSKTVVVTQIGSPIGRRSDQRATLIGLGLNKMNRTRELEDTPAVRGMIDKIAHLVRVEDV.

It belongs to the universal ribosomal protein uL30 family. As to quaternary structure, part of the 50S ribosomal subunit.

This Rhodospirillum rubrum (strain ATCC 11170 / ATH 1.1.1 / DSM 467 / LMG 4362 / NCIMB 8255 / S1) protein is Large ribosomal subunit protein uL30.